The following is a 319-amino-acid chain: Cell division protein FtsN (319 aa).

The segment at 1–30 (MAQRDYVRRSQPAPSRRKKSTSRKKQRNLP) is disordered. The Cytoplasmic segment spans residues 1–33 (MAQRDYVRRSQPAPSRRKKSTSRKKQRNLPAVS). Residues 4 to 6 (RDY) are mediates interaction with FtsA. Residues 15–27 (SRRKKSTSRKKQR) show a composition bias toward basic residues. The chain crosses the membrane as a helical span at residues 34–54 (PAMVAIAAAVLVTFIGGLYFI). The Periplasmic segment spans residues 55–319 (THHKKEESET…TNCIRLAAGG (265 aa)). 2 disordered regions span residues 60–79 (EESE…PPKP) and 89–113 (LESR…TPEQ). Tandem repeats lie at residues 115 to 120 (TPEQRQ), 145 to 150 (TPEQRQ), 197 to 200 (QSKP), and 220 to 223 (QSKP). The interval 115-150 (TPEQRQLLEQMQADMRQQPTQLVEVPWNEQTPEQRQ) is 2 X 6 AA repeats. Residues 140–245 (PWNEQTPEQR…PKPTAEKKDE (106 aa)) are disordered. Residues 143-171 (EQTPEQRQQTLQRQRQAQQLAEQQRLAQQ) show a composition bias toward low complexity. Positions 172–221 (SRTTEQSWQQQTRTSQAAPVQAQPRQSKPASSQQPYQDLLQTPAHTTAQS) are enriched in polar residues. Residues 197 to 223 (QSKPASSQQPYQDLLQTPAHTTAQSKP) are 2 X 4 AA repeats. Low complexity predominate over residues 222-238 (KPQQAAPVARAADAPKP). The SPOR domain maps to 242 to 316 (KKDERRWMVQ…AGHTNCIRLA (75 aa)). An intrachain disulfide couples Cys252 to Cys312.

The protein belongs to the FtsN family. Interacts with FtsA via its N-terminal cytoplasmic domain. Interacts with ZapA, FtsQ, FtsW and FtsI.

It localises to the cell inner membrane. In terms of biological role, essential cell division protein that activates septal peptidoglycan synthesis and constriction of the cell. Acts on both sides of the membrane, via interaction with FtsA in the cytoplasm and interaction with the FtsQBL complex in the periplasm. These interactions may induce a conformational switch in both FtsA and FtsQBL, leading to septal peptidoglycan synthesis by FtsI and associated synthases. Required for full FtsI activity. Required for recruitment of AmiC to the septal ring. This is Cell division protein FtsN from Escherichia coli (strain K12).